The primary structure comprises 170 residues: Protein Rex (170 aa).

The segment covering 1–16 has biased composition (basic residues); that stretch reads MPKTRRQRTRRARRNR. Disordered stretches follow at residues 1–27 and 69–170; these read MPKT…SQDL and VQST…GEKP. A Nuclear localization signal, and RNA-binding (RxRE) motif is present at residues 2-19; that stretch reads PKTRRQRTRRARRNRPPT. Residues 57–71 form a homomultimerization region; the sequence is PPAYIDMPSWPPVQS. Low complexity predominate over residues 82–95; it reads ALSALLSNTLSLAS. The short motif at 83–94 is the Nuclear export signal element; sequence LSALLSNTLSLA. The homomultimerization stretch occupies residues 124–132; that stretch reads PSFNQCEST. Residues 143-160 show a composition bias toward low complexity; sequence PSGISSPPSPSPNLASVP. Phosphoserine; by host occurs at positions 151 and 153. The segment covering 161–170 has biased composition (polar residues); sequence KTSTPPGEKP.

It belongs to the deltaretrovirus Rex protein family. Homomultimer. Post-translationally, phosphorylation is essential for RNA-binding and function.

The protein resides in the host nucleus. It localises to the host nucleolus. Its subcellular location is the host cytoplasm. Its function is as follows. Rex escorts unspliced gag-pro-pol and singly spliced env mRNAs out of the nucleus of infected cells. These mRNAs carry a recognition sequence called Rex responsive element (RxRE or XRE) located at the 3' region of the long terminal repeat (LTR). This function is essential since most HTLV proteins are translated from unspliced or partially spliced pre-mRNAs that cannot exit the nucleus by the pathway used by fully processed cellular mRNAs. The sequence is that of Protein Rex from Human T-cell leukemia virus 2 (HTLV-2).